Reading from the N-terminus, the 1051-residue chain is Putative helicase/primase complex protein (1051 aa).

Belongs to the asfivirus F1055L family.

In terms of biological role, may be involved in DNA replication. The chain is Putative helicase/primase complex protein from Ornithodoros (relapsing fever ticks).